Consider the following 345-residue polypeptide: Biotin synthase (345 aa).

The region spanning 66–291 (PEVEIEGIIS…RTILRFAGGR (226 aa)) is the Radical SAM core domain. [4Fe-4S] cluster is bound by residues cysteine 81, cysteine 85, and cysteine 88. [2Fe-2S] cluster-binding residues include cysteine 124, cysteine 157, cysteine 216, and arginine 286.

The protein belongs to the radical SAM superfamily. Biotin synthase family. In terms of assembly, homodimer. The cofactor is [4Fe-4S] cluster. Requires [2Fe-2S] cluster as cofactor.

The enzyme catalyses (4R,5S)-dethiobiotin + (sulfur carrier)-SH + 2 reduced [2Fe-2S]-[ferredoxin] + 2 S-adenosyl-L-methionine = (sulfur carrier)-H + biotin + 2 5'-deoxyadenosine + 2 L-methionine + 2 oxidized [2Fe-2S]-[ferredoxin]. Its pathway is cofactor biosynthesis; biotin biosynthesis; biotin from 7,8-diaminononanoate: step 2/2. Its function is as follows. Catalyzes the conversion of dethiobiotin (DTB) to biotin by the insertion of a sulfur atom into dethiobiotin via a radical-based mechanism. This Mycobacterium leprae (strain Br4923) protein is Biotin synthase.